The chain runs to 278 residues: 4-deoxy-L-threo-5-hexosulose-uronate ketol-isomerase (278 aa).

Histidine 196, histidine 198, glutamate 203, and histidine 245 together coordinate Zn(2+).

Belongs to the KduI family. It depends on Zn(2+) as a cofactor.

The catalysed reaction is 5-dehydro-4-deoxy-D-glucuronate = 3-deoxy-D-glycero-2,5-hexodiulosonate. It functions in the pathway glycan metabolism; pectin degradation; 2-dehydro-3-deoxy-D-gluconate from pectin: step 4/5. Catalyzes the isomerization of 5-dehydro-4-deoxy-D-glucuronate to 3-deoxy-D-glycero-2,5-hexodiulosonate. This is 4-deoxy-L-threo-5-hexosulose-uronate ketol-isomerase from Salmonella agona (strain SL483).